The chain runs to 206 residues: Small ribosomal subunit protein uS4 (206 aa).

The S4 RNA-binding domain occupies 96 to 156 (GRLDNVVYRM…EKAKKQSRVK (61 aa)).

This sequence belongs to the universal ribosomal protein uS4 family. As to quaternary structure, part of the 30S ribosomal subunit. Contacts protein S5. The interaction surface between S4 and S5 is involved in control of translational fidelity.

In terms of biological role, one of the primary rRNA binding proteins, it binds directly to 16S rRNA where it nucleates assembly of the body of the 30S subunit. Its function is as follows. With S5 and S12 plays an important role in translational accuracy. In Klebsiella pneumoniae (strain 342), this protein is Small ribosomal subunit protein uS4.